The chain runs to 556 residues: Glutamine--tRNA ligase (556 aa).

The 'HIGH' region motif lies at 34–44; the sequence is PEPNGYLHIGH. ATP contacts are provided by residues 35-37 and 41-47; these read EPN and HIGHAKS. 2 residues coordinate L-glutamine: D67 and Y212. ATP contacts are provided by residues T231, 261 to 262, and 269 to 271; these read RL and MSK. Residues 268-272 carry the 'KMSKS' region motif; the sequence is VMSKR.

Belongs to the class-I aminoacyl-tRNA synthetase family. Monomer.

The protein localises to the cytoplasm. It carries out the reaction tRNA(Gln) + L-glutamine + ATP = L-glutaminyl-tRNA(Gln) + AMP + diphosphate. In Vibrio vulnificus (strain YJ016), this protein is Glutamine--tRNA ligase.